The chain runs to 415 residues: Histidine--tRNA ligase (415 aa).

It belongs to the class-II aminoacyl-tRNA synthetase family. Homodimer.

The protein resides in the cytoplasm. It carries out the reaction tRNA(His) + L-histidine + ATP = L-histidyl-tRNA(His) + AMP + diphosphate + H(+). The protein is Histidine--tRNA ligase of Rickettsia akari (strain Hartford).